The primary structure comprises 98 residues: PqqA binding protein (98 aa).

This sequence belongs to the PqqD family. In terms of assembly, monomer. Interacts with PqqE.

It participates in cofactor biosynthesis; pyrroloquinoline quinone biosynthesis. In terms of biological role, functions as a PqqA binding protein and presents PqqA to PqqE, in the pyrroloquinoline quinone (PQQ) biosynthetic pathway. This chain is PqqA binding protein, found in Pseudomonas syringae pv. tomato (strain ATCC BAA-871 / DC3000).